A 466-amino-acid chain; its full sequence is 3-isopropylmalate dehydratase large subunit (466 aa).

[4Fe-4S] cluster-binding residues include Cys-347, Cys-407, and Cys-410.

This sequence belongs to the aconitase/IPM isomerase family. LeuC type 1 subfamily. In terms of assembly, heterodimer of LeuC and LeuD. Requires [4Fe-4S] cluster as cofactor.

It carries out the reaction (2R,3S)-3-isopropylmalate = (2S)-2-isopropylmalate. It participates in amino-acid biosynthesis; L-leucine biosynthesis; L-leucine from 3-methyl-2-oxobutanoate: step 2/4. Functionally, catalyzes the isomerization between 2-isopropylmalate and 3-isopropylmalate, via the formation of 2-isopropylmaleate. This Shewanella sediminis (strain HAW-EB3) protein is 3-isopropylmalate dehydratase large subunit.